Here is a 277-residue protein sequence, read N- to C-terminus: Large ribosomal subunit protein uL2 (277 aa).

The disordered stretch occupies residues 215–263 (LGRKPHQRGSAMNPVDHPHGGGEGRTGAGRVPVSPWGQPAKGLKTRKKR).

Belongs to the universal ribosomal protein uL2 family. As to quaternary structure, part of the 50S ribosomal subunit. Forms a bridge to the 30S subunit in the 70S ribosome.

Its function is as follows. One of the primary rRNA binding proteins. Required for association of the 30S and 50S subunits to form the 70S ribosome, for tRNA binding and peptide bond formation. It has been suggested to have peptidyltransferase activity; this is somewhat controversial. Makes several contacts with the 16S rRNA in the 70S ribosome. In Deinococcus geothermalis (strain DSM 11300 / CIP 105573 / AG-3a), this protein is Large ribosomal subunit protein uL2.